The sequence spans 171 residues: Macro domain-containing protein RSc0334 (171 aa).

Residues 1-171 (MPIPTVTLRA…LYETALNEAR (171 aa)) form the Macro domain.

The protein belongs to the MacroD-type family.

This chain is Macro domain-containing protein RSc0334, found in Ralstonia nicotianae (strain ATCC BAA-1114 / GMI1000) (Ralstonia solanacearum).